We begin with the raw amino-acid sequence, 405 residues long: MEYTEVMVRYGELSTKGKNRKDFINRLATNVERVLKDFPQIEFHPRHDRMHIILNGAPFTEVDKRLKKVFGIQTYSPAIKIPKTLEDIEKTSLELMKETFKPGMTFKINTKRSDHKFEYDTNQLNNLVGDFLFDNIDNLKAEMKHPDLVLRIEVRQDAVYISNQLLHGVGGMPVGTAGKAVMMLSGGIDSPVASWLALKRGVDIEMVHFFSPPYTTEKALAKAKELTGILANYAGKINFIAVPFAEIQETIKEKLPEGYLMTVQRRFMLQLADRIRAMRGGLAIFNGESVGQVASQTLESMVAINDVTTTPVIRPVATMDKTEIIAKAEEIGTFDLSIQPFEDCCTIFAPPRPKTKPKLDKAREYEARLDVEGLIQRALDGIEVMPIYPNQKFLDDKAQEDADLL.

Positions 60 to 165 constitute a THUMP domain; sequence TEVDKRLKKV…QDAVYISNQL (106 aa). ATP is bound by residues 183–184, 208–209, arginine 265, glycine 287, and glutamine 296; these read ML and HF.

It belongs to the ThiI family.

The protein localises to the cytoplasm. The enzyme catalyses [ThiI sulfur-carrier protein]-S-sulfanyl-L-cysteine + a uridine in tRNA + 2 reduced [2Fe-2S]-[ferredoxin] + ATP + H(+) = [ThiI sulfur-carrier protein]-L-cysteine + a 4-thiouridine in tRNA + 2 oxidized [2Fe-2S]-[ferredoxin] + AMP + diphosphate. The catalysed reaction is [ThiS sulfur-carrier protein]-C-terminal Gly-Gly-AMP + S-sulfanyl-L-cysteinyl-[cysteine desulfurase] + AH2 = [ThiS sulfur-carrier protein]-C-terminal-Gly-aminoethanethioate + L-cysteinyl-[cysteine desulfurase] + A + AMP + 2 H(+). It participates in cofactor biosynthesis; thiamine diphosphate biosynthesis. Catalyzes the ATP-dependent transfer of a sulfur to tRNA to produce 4-thiouridine in position 8 of tRNAs, which functions as a near-UV photosensor. Also catalyzes the transfer of sulfur to the sulfur carrier protein ThiS, forming ThiS-thiocarboxylate. This is a step in the synthesis of thiazole, in the thiamine biosynthesis pathway. The sulfur is donated as persulfide by IscS. This Lactobacillus acidophilus (strain ATCC 700396 / NCK56 / N2 / NCFM) protein is Probable tRNA sulfurtransferase.